The sequence spans 256 residues: Geranylgeranylglyceryl phosphate synthase (256 aa).

Residues aspartate 28 and serine 53 each coordinate Mg(2+). Residues tyrosine 172 to glycine 178, glycine 203 to glycine 204, and glycine 225 to threonine 226 contribute to the sn-glycerol 1-phosphate site.

It belongs to the GGGP/HepGP synthase family. Group II subfamily. Mg(2+) serves as cofactor.

It localises to the cytoplasm. It carries out the reaction sn-glycerol 1-phosphate + (2E,6E,10E)-geranylgeranyl diphosphate = sn-3-O-(geranylgeranyl)glycerol 1-phosphate + diphosphate. The protein operates within membrane lipid metabolism; glycerophospholipid metabolism. Functionally, prenyltransferase that catalyzes the transfer of the geranylgeranyl moiety of geranylgeranyl diphosphate (GGPP) to the C3 hydroxyl of sn-glycerol-1-phosphate (G1P). This reaction is the first ether-bond-formation step in the biosynthesis of archaeal membrane lipids. This chain is Geranylgeranylglyceryl phosphate synthase, found in Methanococcus maripaludis (strain C5 / ATCC BAA-1333).